Here is a 299-residue protein sequence, read N- to C-terminus: Probable lipid kinase YegS-like (299 aa).

In terms of domain architecture, DAGKc spans 2–133 (ATYPESLLIL…VDIAQVNDKT (132 aa)). Residues T40, 66–72 (GDGTINE), and T95 contribute to the ATP site. L215, D218, and L220 together coordinate Mg(2+). The active-site Proton acceptor is E271.

This sequence belongs to the diacylglycerol/lipid kinase family. YegS lipid kinase subfamily. Requires Mg(2+) as cofactor. It depends on Ca(2+) as a cofactor.

The protein resides in the cytoplasm. In terms of biological role, probably phosphorylates lipids; the in vivo substrate is unknown. This is Probable lipid kinase YegS-like from Enterobacter sp. (strain 638).